A 227-amino-acid polypeptide reads, in one-letter code: Protein M1425_1941 (227 aa).

Residues 15-209 enclose the AMMECR1 domain; it reads EIGRFLIEIA…ETRPDGSDII (195 aa).

In Saccharolobus islandicus (strain M.14.25 / Kamchatka #1) (Sulfolobus islandicus), this protein is Protein M1425_1941.